The primary structure comprises 561 residues: MKYIVMQDAFFVVLLLVLAVPLGIYMYKVMIGEKVFLSRVLEPVERFGYRLMGVSEVGMSAKRYAVSVLAFSAVGFVFVMAVLMLQGFLPLNPEGMKGLSFSLAFNTAASFVSNTNWQAYSGEAALSYFSQSIGLTVQNFVSAATGIAVLFAVIRGFIWKKQKTIGNFWQDLFRVTLYILLPLSLILALLLVSQGVVQSFADYSVVETLENGAKQLIPLGPAASQIAIKQLGTNGGGFFGANSAFPFENPSSFTNLIEMLAILLIPVALVVMFGRAVKDSKQGRAIMTAMMIVFVIGVVAITISEQFAGPHYQGVATSGSMEGKEVRFGVGGSSLFAASTTAASNGAVNAMHDSLTPLGGLVPMFFMQLGEVIFGGVGSGLYGMIGFIILTVFIAGLLVGRTPEYLGKKIEPYDMKMVCLLILVPPLLTLFGTAVAVMMPSVQASVSASGAHGFSEVLYAFTSMGNNNGSAFAGFAADTTFTNMVGAVMMLLARFIPLVAALYLAQNMAGKSSVAASSGTLSTKNGMFIGLLIGVVVLVGALSFLPALALGPIADFFTTFK.

10 helical membrane passes run 4-24, 65-85, 133-153, 177-197, 253-273, 285-305, 380-400, 417-437, 484-504, and 528-548; these read IVMQ…PLGI, AVSV…VLML, IGLT…LFAV, LYIL…QGVV, FTNL…VVMF, AIMT…TISE, GLYG…LLVG, MVCL…AVAV, MVGA…ALYL, and FIGL…LPAL.

The protein belongs to the KdpA family. In terms of assembly, the system is composed of three essential subunits: KdpA, KdpB and KdpC.

The protein localises to the cell membrane. Part of the high-affinity ATP-driven potassium transport (or Kdp) system, which catalyzes the hydrolysis of ATP coupled with the electrogenic transport of potassium into the cytoplasm. This subunit binds the extracellular potassium ions and delivers the ions to the membrane domain of KdpB through an intramembrane tunnel. This Listeria monocytogenes serotype 4b (strain F2365) protein is Potassium-transporting ATPase potassium-binding subunit.